A 984-amino-acid polypeptide reads, in one-letter code: Probable beta-galactosidase C (984 aa).

The signal sequence occupies residues 1 to 19 (MRLLNIFTTLCLLLWSGAA). Positions 78, 123, 124, 125, and 183 each coordinate substrate. Glutamate 184 (proton donor) is an active-site residue. A substrate-binding site is contributed by tyrosine 247. Residues cysteine 253 and cysteine 300 are joined by a disulfide bond. Asparagine 272 carries N-linked (GlcNAc...) asparagine glycosylation. Glutamate 283 (nucleophile) is an active-site residue. Substrate is bound at residue tyrosine 349. Asparagine 387, asparagine 433, asparagine 462, asparagine 516, asparagine 583, asparagine 599, asparagine 673, asparagine 716, asparagine 756, asparagine 860, and asparagine 870 each carry an N-linked (GlcNAc...) asparagine glycan.

Belongs to the glycosyl hydrolase 35 family.

The protein resides in the secreted. The catalysed reaction is Hydrolysis of terminal non-reducing beta-D-galactose residues in beta-D-galactosides.. Its function is as follows. Cleaves beta-linked terminal galactosyl residues from gangliosides, glycoproteins, and glycosaminoglycans. This is Probable beta-galactosidase C (lacC) from Sclerotinia sclerotiorum (strain ATCC 18683 / 1980 / Ss-1) (White mold).